We begin with the raw amino-acid sequence, 486 residues long: Cardiolipin synthase A (486 aa).

Helical transmembrane passes span 3 to 23 and 38 to 58; these read TFYTVVNWLVILGYWLLIAGV and MAWLLIIYILPLVGIIAYLSF. 2 PLD phosphodiesterase domains span residues 219–246 and 399–426; these read MDLRQHRKMVMIDNYIAYTGSMNMVDPR and EGGLLHTKSVLVDGELSLVGTVNLDMRS. Active-site residues include His224, Lys226, Asp231, His404, Lys406, and Asp411.

This sequence belongs to the phospholipase D family. Cardiolipin synthase subfamily. ClsA sub-subfamily.

It is found in the cell inner membrane. It catalyses the reaction 2 a 1,2-diacyl-sn-glycero-3-phospho-(1'-sn-glycerol) = a cardiolipin + glycerol. In terms of biological role, catalyzes the reversible phosphatidyl group transfer from one phosphatidylglycerol molecule to another to form cardiolipin (CL) (diphosphatidylglycerol) and glycerol. The polypeptide is Cardiolipin synthase A (Klebsiella pneumoniae subsp. pneumoniae (strain ATCC 700721 / MGH 78578)).